A 465-amino-acid chain; its full sequence is GTPase Der (465 aa).

2 consecutive EngA-type G domains span residues 3–166 and 184–358; these read FLVA…LNEF and IHFS…ACAN. GTP-binding positions include 9-16, 56-60, 118-121, 190-197, 237-241, and 302-305; these read GRANVGKS, DTGGI, NKVD, GRPNVGKS, DTAGV, and NKWD. One can recognise a KH-like domain in the interval 359–443; the sequence is KKITTADATR…PIVFEFKQSE (85 aa).

It belongs to the TRAFAC class TrmE-Era-EngA-EngB-Septin-like GTPase superfamily. EngA (Der) GTPase family. As to quaternary structure, associates with the 50S ribosomal subunit.

Functionally, GTPase that plays an essential role in the late steps of ribosome biogenesis. This is GTPase Der from Francisella philomiragia subsp. philomiragia (strain ATCC 25017 / CCUG 19701 / FSC 153 / O#319-036).